We begin with the raw amino-acid sequence, 499 residues long: Bifunctional NAD(P)H-hydrate repair enzyme Nnr (499 aa).

Residues 1–217 (MFITSKEMRR…PEIAERICGP (217 aa)) are NAD(P)H-hydrate epimerase. The region spanning 8 to 213 (MRRIELNSRW…NAGIPEIAER (206 aa)) is the YjeF N-terminal domain. The segment at 54–58 (GNGGD) is NADPHX 1; for epimerase activity. The K(+) site is built by Asn-55 and Asp-124. Positions 128–134 (GFGIRGR) are NADPHX 1; for epimerase activity. Asp-160 lines the (6S)-NADPHX pocket. Thr-163 serves as a coordination point for K(+). The region spanning 217–485 (PGDLITSDIW…EYVPKVLRNP (269 aa)) is the YjeF C-terminal domain. The segment at 217-499 (PGDLITSDIW…PEAVTEVRRD (283 aa)) is ADP-dependent (S)-NAD(P)H-hydrate dehydratase. A (6S)-NADPHX-binding site is contributed by Gly-314. An NADPHX 2; for dehydratase activity region spans residues 360–366 (HAGEFRR). Residues 397–401 (KGRVD) and 417–426 (TPAMTVGGTG) contribute to the ADP site. Asp-427 provides a ligand contact to (6S)-NADPHX.

The protein in the N-terminal section; belongs to the NnrE/AIBP family. This sequence in the C-terminal section; belongs to the NnrD/CARKD family. It depends on K(+) as a cofactor.

It carries out the reaction (6S)-NADHX + ADP = AMP + phosphate + NADH + H(+). The enzyme catalyses (6S)-NADPHX + ADP = AMP + phosphate + NADPH + H(+). It catalyses the reaction (6R)-NADHX = (6S)-NADHX. The catalysed reaction is (6R)-NADPHX = (6S)-NADPHX. Bifunctional enzyme that catalyzes the epimerization of the S- and R-forms of NAD(P)HX and the dehydration of the S-form of NAD(P)HX at the expense of ADP, which is converted to AMP. This allows the repair of both epimers of NAD(P)HX, a damaged form of NAD(P)H that is a result of enzymatic or heat-dependent hydration. In Methanopyrus kandleri (strain AV19 / DSM 6324 / JCM 9639 / NBRC 100938), this protein is Bifunctional NAD(P)H-hydrate repair enzyme Nnr (nnr).